Reading from the N-terminus, the 223-residue chain is Ubiquitin carboxyl-terminal hydrolase isozyme L1 (223 aa).

Methionine 1 is modified (N-acetylmethionine). A UCH catalytic domain is found at 2–221 (QLKPMEINPE…VRFSAVALCK (220 aa)). Residues 5-10 (PMEINP) are interaction with ubiquitin. Catalysis depends on cysteine 90, which acts as the Nucleophile. Residue serine 125 is modified to Phosphoserine. The active-site Proton donor is the histidine 161. The interval 211–216 (EVRFSA) is interaction with ubiquitin. Cysteine 220 carries S-farnesyl cysteine lipidation. Positions 221 to 223 (KAA) are cleaved as a propeptide — removed in mature form.

The protein belongs to the peptidase C12 family. Monomer. Homodimer. Interacts with SNCA. Interacts with COPS5. O-glycosylated. As to expression, found in neuronal cell bodies and processes throughout the neocortex (at protein level). Expressed in neurons and cells of the diffuse neuroendocrine system and their tumors. Weakly expressed in ovary. Down-regulated in brains from Parkinson disease and Alzheimer disease patients.

The protein resides in the cytoplasm. The protein localises to the endoplasmic reticulum membrane. It catalyses the reaction Thiol-dependent hydrolysis of ester, thioester, amide, peptide and isopeptide bonds formed by the C-terminal Gly of ubiquitin (a 76-residue protein attached to proteins as an intracellular targeting signal).. Functionally, deubiquitinase that plays a role in the regulation of several processes such as maintenance of synaptic function, cardiac function, inflammatory response or osteoclastogenesis. Abrogates the ubiquitination of multiple proteins including WWTR1/TAZ, EGFR, HIF1A and beta-site amyloid precursor protein cleaving enzyme 1/BACE1. In addition, recognizes and hydrolyzes a peptide bond at the C-terminal glycine of ubiquitin to maintain a stable pool of monoubiquitin that is a key requirement for the ubiquitin-proteasome and the autophagy-lysosome pathways. Regulates amyloid precursor protein/APP processing by promoting BACE1 degradation resulting in decreased amyloid beta production. Plays a role in the immune response by regulating the ability of MHC I molecules to reach cross-presentation compartments competent for generating Ag-MHC I complexes. Mediates the 'Lys-48'-linked deubiquitination of the transcriptional coactivator WWTR1/TAZ leading to its stabilization and inhibition of osteoclastogenesis. Deubiquitinates and stabilizes epidermal growth factor receptor EGFR to prevent its degradation and to activate its downstream mediators. Modulates oxidative activity in skeletal muscle by regulating key mitochondrial oxidative proteins. Enhances the activity of hypoxia-inducible factor 1-alpha/HIF1A by abrogateing its VHL E3 ligase-mediated ubiquitination and consequently inhibiting its degradation. The polypeptide is Ubiquitin carboxyl-terminal hydrolase isozyme L1 (UCHL1) (Homo sapiens (Human)).